Reading from the N-terminus, the 345-residue chain is MNPITLAIIYFTIFLGPVITMSSTNLMLMWVGLEFSLLAIIPMLINKKNPRSTEAATKYFVTQATASMIILLAIVLNYKQLGTWMFQQQTNGLILNMTLMALSMKLGLAPFHFWLPEVTQGIPLHMGLILLTWQKIAPLSILIQIYPLLNSTIILMLAITSIFMGAWGGLNQTQMRKIMAYSSIAHMGWMLAILPYNPSLTLLNLMIYIILTAPMFMALMLNNSMTINSISLLWNKTPAMLTMISLMLLSLGGLPPLTGFLPKWIIITELMKNNCLIMATLMAMMALLNLFFYTRLIYSTSLTMFPTNNNSKMMTHQTKTKPNLMFSTLAIMSTMTLPLAPQLIT.

10 consecutive transmembrane segments (helical) span residues 1 to 21 (MNPI…VITM), 25 to 45 (NLML…PMLI), 56 to 76 (ATKY…AIVL), 92 to 114 (GLIL…FHFW), 149 to 171 (LNST…GGLN), 178 to 198 (IMAY…PYNP), 200 to 220 (LTLL…MALM), 241 to 261 (LTMI…TGFL), 274 to 294 (NCLI…FFYT), and 324 to 344 (LMFS…PQLI).

This sequence belongs to the complex I subunit 2 family. As to quaternary structure, core subunit of respiratory chain NADH dehydrogenase (Complex I) which is composed of 45 different subunits. Interacts with TMEM242.

Its subcellular location is the mitochondrion inner membrane. The catalysed reaction is a ubiquinone + NADH + 5 H(+)(in) = a ubiquinol + NAD(+) + 4 H(+)(out). In terms of biological role, core subunit of the mitochondrial membrane respiratory chain NADH dehydrogenase (Complex I) which catalyzes electron transfer from NADH through the respiratory chain, using ubiquinone as an electron acceptor. Essential for the catalytic activity and assembly of complex I. The chain is NADH-ubiquinone oxidoreductase chain 2 from Mus musculus (Mouse).